We begin with the raw amino-acid sequence, 224 residues long: SPI-2 type 3 secretion system stator protein (224 aa).

This sequence belongs to the SctL stator family. In terms of assembly, the core secretion machinery of the T3SS is composed of approximately 20 different proteins, including cytoplasmic components, a base, an export apparatus and a needle. This subunit is part of the cytosolic complex. Interacts directly with SsaN/SctN2 (T3SS-2 ATPase).

It is found in the cytoplasm. In terms of biological role, component of the type III secretion system (T3SS), also called injectisome, which is used to inject bacterial effector proteins into eukaryotic host cells. Acts as a regulator of the SsaN/SctN2 ATPase activity. The polypeptide is SPI-2 type 3 secretion system stator protein (Salmonella typhimurium (strain LT2 / SGSC1412 / ATCC 700720)).